Consider the following 441-residue polypeptide: BTB/POZ domain-containing protein At4g30940 (441 aa).

Residues 6-74 (DRIKFNVGGR…LRTGDLNIPP (69 aa)) enclose the BTB domain.

It functions in the pathway protein modification; protein ubiquitination. In terms of biological role, may act as a substrate-specific adapter of an E3 ubiquitin-protein ligase complex (CUL3-RBX1-BTB) which mediates the ubiquitination and subsequent proteasomal degradation of target proteins. The chain is BTB/POZ domain-containing protein At4g30940 from Arabidopsis thaliana (Mouse-ear cress).